The following is a 129-amino-acid chain: D-ribose pyranase 1 (129 aa).

The Proton donor role is filled by His20. Substrate-binding positions include Asp28, His96, and 118 to 120 (YSN).

Belongs to the RbsD / FucU family. RbsD subfamily. Homodecamer.

It localises to the cytoplasm. It catalyses the reaction beta-D-ribopyranose = beta-D-ribofuranose. Its pathway is carbohydrate metabolism; D-ribose degradation; D-ribose 5-phosphate from beta-D-ribopyranose: step 1/2. Catalyzes the interconversion of beta-pyran and beta-furan forms of D-ribose. The protein is D-ribose pyranase 1 of Rubrobacter xylanophilus (strain DSM 9941 / JCM 11954 / NBRC 16129 / PRD-1).